A 177-amino-acid chain; its full sequence is Bifunctional protein PyrR (177 aa).

Substrate-binding positions include 42-43 (SR), 104-112 (DDVLYTGRT), and Arg137. Positions 100–112 (VVIVDDVLYTGRT) match the PRPP-binding motif.

The protein belongs to the purine/pyrimidine phosphoribosyltransferase family. PyrR subfamily.

It carries out the reaction UMP + diphosphate = 5-phospho-alpha-D-ribose 1-diphosphate + uracil. Its function is as follows. Regulates the transcription of the pyrimidine nucleotide (pyr) operon in response to exogenous pyrimidines. Functionally, also displays a weak uracil phosphoribosyltransferase activity which is not physiologically significant. The protein is Bifunctional protein PyrR of Fusobacterium nucleatum subsp. nucleatum (strain ATCC 25586 / DSM 15643 / BCRC 10681 / CIP 101130 / JCM 8532 / KCTC 2640 / LMG 13131 / VPI 4355).